The primary structure comprises 357 residues: Chorismate synthase (357 aa).

Positions 48 and 54 each coordinate NADP(+). FMN is bound by residues 125–127 (RSS), 238–239 (NA), glycine 278, 293–297 (KPTSS), and arginine 319.

It belongs to the chorismate synthase family. Homotetramer. Requires FMNH2 as cofactor.

The catalysed reaction is 5-O-(1-carboxyvinyl)-3-phosphoshikimate = chorismate + phosphate. Its pathway is metabolic intermediate biosynthesis; chorismate biosynthesis; chorismate from D-erythrose 4-phosphate and phosphoenolpyruvate: step 7/7. Functionally, catalyzes the anti-1,4-elimination of the C-3 phosphate and the C-6 proR hydrogen from 5-enolpyruvylshikimate-3-phosphate (EPSP) to yield chorismate, which is the branch point compound that serves as the starting substrate for the three terminal pathways of aromatic amino acid biosynthesis. This reaction introduces a second double bond into the aromatic ring system. The protein is Chorismate synthase of Blochmanniella floridana.